Here is a 320-residue protein sequence, read N- to C-terminus: Polycomb complex protein BMI-1-A (320 aa).

The segment at 18–57 (CVLCGGYFIDATTIIECLHSFCKMCIVRYLETSKYCPICD) adopts an RING-type zinc-finger fold. Positions 81 to 95 (KLVPGLFKNEMKRRR) match the Nuclear localization signal motif. Residues 234-320 (ITHPQEGLNN…ALNGSSTSSG (87 aa)) form a disordered region. The segment covering 262-281 (VPSTSSPLPSPSTLVQPSQP) has biased composition (low complexity). Residues 285–304 (HISSPINGTTMTSPNRQFNF) are compositionally biased toward polar residues.

Component of a PRC1-like complex. Homodimer. Interacts with cbx2.

Its subcellular location is the nucleus. Its function is as follows. Component of a Polycomb group (PcG) multiprotein PRC1-like complex, a complex class required to maintain the transcriptionally repressive state of many genes, including Hox genes, throughout development. PcG PRC1 complex acts via chromatin remodeling and modification of histones; it mediates monoubiquitination of histone H2A 'Lys-119', rendering chromatin heritably changed in its expressibility. In the PRC1 complex, it is required to stimulate the E3 ubiquitin-protein ligase activity of rnf2. This Danio rerio (Zebrafish) protein is Polycomb complex protein BMI-1-A (bmi1a).